The primary structure comprises 188 residues: Ribosome-recycling factor (188 aa).

The protein belongs to the RRF family.

The protein localises to the cytoplasm. Responsible for the release of ribosomes from messenger RNA at the termination of protein biosynthesis. May increase the efficiency of translation by recycling ribosomes from one round of translation to another. This is Ribosome-recycling factor from Caulobacter sp. (strain K31).